The sequence spans 244 residues: 1-(5-phosphoribosyl)-5-[(5-phosphoribosylamino)methylideneamino] imidazole-4-carboxamide isomerase (244 aa).

The Proton acceptor role is filled by Asp-10. Asp-129 functions as the Proton donor in the catalytic mechanism.

The protein belongs to the HisA/HisF family.

Its subcellular location is the cytoplasm. The catalysed reaction is 1-(5-phospho-beta-D-ribosyl)-5-[(5-phospho-beta-D-ribosylamino)methylideneamino]imidazole-4-carboxamide = 5-[(5-phospho-1-deoxy-D-ribulos-1-ylimino)methylamino]-1-(5-phospho-beta-D-ribosyl)imidazole-4-carboxamide. Its pathway is amino-acid biosynthesis; L-histidine biosynthesis; L-histidine from 5-phospho-alpha-D-ribose 1-diphosphate: step 4/9. This chain is 1-(5-phosphoribosyl)-5-[(5-phosphoribosylamino)methylideneamino] imidazole-4-carboxamide isomerase, found in Rhodococcus erythropolis (strain PR4 / NBRC 100887).